The primary structure comprises 352 residues: Holliday junction branch migration complex subunit RuvB (352 aa).

The interval 4–185 is large ATPase domain (RuvB-L); sequence ADRLIAATGP…FGIVQRLEFY (182 aa). Residues Ile-24, Arg-25, Gly-66, Lys-69, Thr-70, Thr-71, 132–134, Arg-175, Tyr-185, and Arg-222 each bind ATP; that span reads EDF. Thr-70 contacts Mg(2+). A small ATPAse domain (RuvB-S) region spans residues 186-256; the sequence is STADLATIVS…VADLALNLLD (71 aa). Residues 259–352 form a head domain (RuvB-H) region; the sequence is EHGFDHQDRR…VDEFLDAVDD (94 aa). Arg-295, Arg-314, and Arg-319 together coordinate DNA.

The protein belongs to the RuvB family. In terms of assembly, homohexamer. Forms an RuvA(8)-RuvB(12)-Holliday junction (HJ) complex. HJ DNA is sandwiched between 2 RuvA tetramers; dsDNA enters through RuvA and exits via RuvB. An RuvB hexamer assembles on each DNA strand where it exits the tetramer. Each RuvB hexamer is contacted by two RuvA subunits (via domain III) on 2 adjacent RuvB subunits; this complex drives branch migration. In the full resolvosome a probable DNA-RuvA(4)-RuvB(12)-RuvC(2) complex forms which resolves the HJ.

It localises to the cytoplasm. It carries out the reaction ATP + H2O = ADP + phosphate + H(+). The RuvA-RuvB-RuvC complex processes Holliday junction (HJ) DNA during genetic recombination and DNA repair, while the RuvA-RuvB complex plays an important role in the rescue of blocked DNA replication forks via replication fork reversal (RFR). RuvA specifically binds to HJ cruciform DNA, conferring on it an open structure. The RuvB hexamer acts as an ATP-dependent pump, pulling dsDNA into and through the RuvAB complex. RuvB forms 2 homohexamers on either side of HJ DNA bound by 1 or 2 RuvA tetramers; 4 subunits per hexamer contact DNA at a time. Coordinated motions by a converter formed by DNA-disengaged RuvB subunits stimulates ATP hydrolysis and nucleotide exchange. Immobilization of the converter enables RuvB to convert the ATP-contained energy into a lever motion, pulling 2 nucleotides of DNA out of the RuvA tetramer per ATP hydrolyzed, thus driving DNA branch migration. The RuvB motors rotate together with the DNA substrate, which together with the progressing nucleotide cycle form the mechanistic basis for DNA recombination by continuous HJ branch migration. Branch migration allows RuvC to scan DNA until it finds its consensus sequence, where it cleaves and resolves cruciform DNA. This Pseudomonas fluorescens (strain SBW25) protein is Holliday junction branch migration complex subunit RuvB.